Reading from the N-terminus, the 241-residue chain is Probable porphobilinogen deaminase (241 aa).

This sequence belongs to the HMBS family.

The enzyme catalyses 4 porphobilinogen + H2O = hydroxymethylbilane + 4 NH4(+). Its pathway is porphyrin-containing compound metabolism; protoporphyrin-IX biosynthesis; coproporphyrinogen-III from 5-aminolevulinate: step 2/4. In terms of biological role, tetrapolymerization of the monopyrrole PBG into the hydroxymethylbilane pre-uroporphyrinogen in several discrete steps. In Chlamydia trachomatis serovar D (strain ATCC VR-885 / DSM 19411 / UW-3/Cx), this protein is Probable porphobilinogen deaminase (hemC).